The chain runs to 960 residues: Protein mono-ADP-ribosyltransferase PARP10 (960 aa).

Glu103 carries the post-translational modification ADP-ribosyl glutamic acid. The span at 325 to 341 (SMGSTSPVDPVESSTEL) shows a compositional bias: polar residues. The interval 325-346 (SMGSTSPVDPVESSTELPEQVG) is disordered. Ser381 and Ser388 each carry phosphoserine. Residues 553-576 (SPHGGEDRVPLEMEKEKPGGPGET) are disordered. The segment covering 555-570 (HGGEDRVPLEMEKEKP) has biased composition (basic and acidic residues). Residues 604–621 (LEEEATLQLAIHRSLESQ) carry the Ubiquitin-interacting motif. Position 617 is a phosphoserine (Ser617). The tract at residues 649 to 856 (DEDTGGEAQL…CAHGFNRSFC (208 aa)) is myc binding. The PARP catalytic domain maps to 755–960 (PNLSEQGLKE…TCKNILPGTP (206 aa)). The PIP-box motif lies at 780 to 787 (QDVVRAFY). The residue at position 831 (Glu831) is an ADP-ribosyl glutamic acid.

Belongs to the ARTD/PARP family. As to quaternary structure, interacts with MYC. Interacts with PARP14. Interacts (via-PIP box and ubiquitin-interacting motifs) with PCNA. Stimulated through its phosphorylation by CDK2. Acquires CDK-dependent phosphorylation through late-G1 to S phase, and from prometaphase to cytokinesis in the nucleolar organizing regions. Phosphorylation is suppressed in growth-arrested cells. In terms of processing, auto-mono-ADP-ribosylated on glutamate and lysine residues.

Its subcellular location is the cytoplasm. It is found in the nucleus. The catalysed reaction is L-lysyl-[protein] + NAD(+) = N(6)-(ADP-D-ribosyl)-L-lysyl-[protein] + nicotinamide + H(+). It catalyses the reaction L-aspartyl-[protein] + NAD(+) = 4-O-(ADP-D-ribosyl)-L-aspartyl-[protein] + nicotinamide. It carries out the reaction L-glutamyl-[protein] + NAD(+) = 5-O-(ADP-D-ribosyl)-L-glutamyl-[protein] + nicotinamide. Its function is as follows. ADP-ribosyltransferase that mediates mono-ADP-ribosylation of glutamate and aspartate residues on target proteins. In contrast to PARP1 and PARP2, it is not able to mediate poly-ADP-ribosylation. Catalyzes mono-ADP-ribosylation of GSK3B, leading to negatively regulate GSK3B kinase activity. Involved in translesion DNA synthesis in response to DNA damage via its interaction with PCNA. The protein is Protein mono-ADP-ribosyltransferase PARP10 of Mus musculus (Mouse).